The primary structure comprises 831 residues: Translation initiation factor IF-2 (831 aa).

In terms of domain architecture, tr-type G spans Thr-329–Lys-499. The G1 stretch occupies residues Gly-338–Thr-345. GTP is bound at residue Gly-338 to Thr-345. A G2 region spans residues Gly-363–His-367. Residues Asp-385–Gly-388 are G3. Residues Asp-385–His-389 and Asn-439–Asp-442 contribute to the GTP site. A G4 region spans residues Asn-439–Asp-442. Positions Ser-475–Leu-477 are G5.

It belongs to the TRAFAC class translation factor GTPase superfamily. Classic translation factor GTPase family. IF-2 subfamily.

It localises to the cytoplasm. In terms of biological role, one of the essential components for the initiation of protein synthesis. Protects formylmethionyl-tRNA from spontaneous hydrolysis and promotes its binding to the 30S ribosomal subunits. Also involved in the hydrolysis of GTP during the formation of the 70S ribosomal complex. The sequence is that of Translation initiation factor IF-2 from Rickettsia rickettsii (strain Iowa).